The chain runs to 523 residues: Probable aminopeptidase NPEPL1 (523 aa).

Residues K260 and D265 each contribute to the Zn(2+) site. K272 is a catalytic residue. Zn(2+) is bound by residues D283, D342, and E344. R346 is a catalytic residue.

It belongs to the peptidase M17 family. Requires Zn(2+) as cofactor. Mn(2+) is required as a cofactor. As to expression, ubiquitously expressed.

Its function is as follows. Probably catalyzes the removal of unsubstituted N-terminal amino acids from various peptides. In Homo sapiens (Human), this protein is Probable aminopeptidase NPEPL1 (NPEPL1).